We begin with the raw amino-acid sequence, 288 residues long: Chitinase 5 (288 aa).

The signal sequence occupies residues 1–29 (MANSPTPTMLAFLALGLALLLSATGQASA). The 35-residue stretch at 30 to 64 (QNCGCQSNMCCSKWGYCGTGKDYCGDGCRSGPCYG) folds into the Chitin-binding type-1 domain. 7 disulfides stabilise this stretch: C32/C40, C34/C46, C39/C53, C57/C62, C107/C156, C169/C178, and C256/C288. The active-site Proton donor is E151.

This sequence belongs to the glycosyl hydrolase 19 family. Chitinase class IV subfamily. As to expression, expressed in sheaths and meristems and at lower levels in roots and leaves.

It carries out the reaction Random endo-hydrolysis of N-acetyl-beta-D-glucosaminide (1-&gt;4)-beta-linkages in chitin and chitodextrins.. Functionally, may function in reproductive organs during embryogenesis and seed maturation. In Oryza sativa subsp. japonica (Rice), this protein is Chitinase 5 (Cht5).